The chain runs to 224 residues: Biosynthetic peptidoglycan transglycosylase (224 aa).

Residues 12 to 32 (ILVVLAILPVFLLLVYSLPFV) traverse the membrane as a helical segment.

This sequence belongs to the glycosyltransferase 51 family.

It localises to the cell inner membrane. It carries out the reaction [GlcNAc-(1-&gt;4)-Mur2Ac(oyl-L-Ala-gamma-D-Glu-L-Lys-D-Ala-D-Ala)](n)-di-trans,octa-cis-undecaprenyl diphosphate + beta-D-GlcNAc-(1-&gt;4)-Mur2Ac(oyl-L-Ala-gamma-D-Glu-L-Lys-D-Ala-D-Ala)-di-trans,octa-cis-undecaprenyl diphosphate = [GlcNAc-(1-&gt;4)-Mur2Ac(oyl-L-Ala-gamma-D-Glu-L-Lys-D-Ala-D-Ala)](n+1)-di-trans,octa-cis-undecaprenyl diphosphate + di-trans,octa-cis-undecaprenyl diphosphate + H(+). It participates in cell wall biogenesis; peptidoglycan biosynthesis. Its function is as follows. Peptidoglycan polymerase that catalyzes glycan chain elongation from lipid-linked precursors. This Brucella melitensis biotype 1 (strain ATCC 23456 / CCUG 17765 / NCTC 10094 / 16M) protein is Biosynthetic peptidoglycan transglycosylase.